Reading from the N-terminus, the 438-residue chain is Citrate synthase (438 aa).

Residues His-306 and Asp-364 contribute to the active site.

This sequence belongs to the citrate synthase family.

The enzyme catalyses oxaloacetate + acetyl-CoA + H2O = citrate + CoA + H(+). It functions in the pathway carbohydrate metabolism; tricarboxylic acid cycle; isocitrate from oxaloacetate: step 1/2. This Bartonella quintana (strain Toulouse) (Rochalimaea quintana) protein is Citrate synthase (gltA).